Here is a 241-residue protein sequence, read N- to C-terminus: Orotidine 5'-phosphate decarboxylase (241 aa).

Substrate contacts are provided by residues Asp16, Lys37, 64–73, Thr128, Arg190, Gln199, Gly219, and Arg220; that span reads DLKFHDIPTT. The active-site Proton donor is the Lys66.

This sequence belongs to the OMP decarboxylase family. Type 1 subfamily. In terms of assembly, homodimer.

The catalysed reaction is orotidine 5'-phosphate + H(+) = UMP + CO2. It functions in the pathway pyrimidine metabolism; UMP biosynthesis via de novo pathway; UMP from orotate: step 2/2. Functionally, catalyzes the decarboxylation of orotidine 5'-monophosphate (OMP) to uridine 5'-monophosphate (UMP). The polypeptide is Orotidine 5'-phosphate decarboxylase (Prochlorococcus marinus (strain NATL2A)).